Here is a 432-residue protein sequence, read N- to C-terminus: Benzoyl-CoA reductase subunit B (432 aa).

It belongs to the FldB/FldC dehydratase alpha/beta subunit family. In terms of assembly, heterotetramer composed of A, B, C, and D subunits. Iron-sulfur cluster is required as a cofactor. The cofactor is an oxidized flavin.

The enzyme catalyses cyclohexa-1,5-diene-1-carbonyl-CoA + oxidized 2[4Fe-4S]-[ferredoxin] + 2 ADP + 2 phosphate = reduced 2[4Fe-4S]-[ferredoxin] + benzoyl-CoA + 2 ATP + 2 H2O. It catalyses the reaction 3-hydroxybenzoyl-CoA + AH2 + 2 ATP + 2 H2O = 3-hydroxycyclohexa-1,5-diene-1-carbonyl-CoA + A + 2 ADP + 2 phosphate + 2 H(+). Its function is as follows. Catalyzes the anaerobic reduction of benzoyl-CoA and 3-hydroxybenzoyl-CoA to form cyclohexa-1,5-diene-1-carbonyl-CoA and 3-hydroxycyclohexa-1,5-diene-1-carbonyl-CoA, respectively. The enzyme also reduces other benzoyl-CoA analogs with small substituents at the aromatic ring. The protein is Benzoyl-CoA reductase subunit B (bcrB) of Thauera aromatica.